We begin with the raw amino-acid sequence, 82 residues long: DNA-directed RNA polymerase subunit omega (82 aa).

Belongs to the RNA polymerase subunit omega family. The RNAP catalytic core consists of 2 alpha, 1 beta, 1 beta' and 1 omega subunit. When a sigma factor is associated with the core the holoenzyme is formed, which can initiate transcription.

It carries out the reaction RNA(n) + a ribonucleoside 5'-triphosphate = RNA(n+1) + diphosphate. Functionally, promotes RNA polymerase assembly. Latches the N- and C-terminal regions of the beta' subunit thereby facilitating its interaction with the beta and alpha subunits. In Lachnoclostridium phytofermentans (strain ATCC 700394 / DSM 18823 / ISDg) (Clostridium phytofermentans), this protein is DNA-directed RNA polymerase subunit omega.